A 348-amino-acid polypeptide reads, in one-letter code: Lysophosphatidic acid receptor 2 (348 aa).

Over 1–30 (MGQCYYNETIGFFYNNSGKELSLHWRPKDV) the chain is Extracellular. Residues Asn-7 and Asn-15 are each glycosylated (N-linked (GlcNAc...) asparagine). A helical membrane pass occupies residues 31-51 (VVVALGLTVSVLVLLTNLLVI). Over 52 to 66 (AAIASNRRFHQPIYY) the chain is Cytoplasmic. Residues 67-87 (LLGNLAAADLFAGMAYLFLMF) traverse the membrane as a helical segment. The Extracellular segment spans residues 88–104 (HTGPRTARLSIKGWFLR). The helical transmembrane segment at 105–124 (QGLLDTSLTASVATLLAIAV) threads the bilayer. The Cytoplasmic segment spans residues 125–144 (ERHRSVMAVQLHSRLPRGRV). Residues 145-165 (VTLIVGVWAAALGLGLLPAHF) traverse the membrane as a helical segment. Residues 166–185 (WHCLCDLDSCSRMVPLFSRS) lie on the Extracellular side of the membrane. The helical transmembrane segment at 186 to 206 (YLAAWALSSLLVFLLMVAVYT) threads the bilayer. The Cytoplasmic segment spans residues 207 to 239 (RIFFYVRRRVERMAEHVSCHPRYRETTLSLVKT). A helical membrane pass occupies residues 240 to 260 (VVIILGAFVVCWTPGQVVLLL). At 261–270 (DGLDCKSCNV) the chain is on the extracellular side. Residues 271 to 291 (LAVEKYFLLLAEANSLVNAVV) traverse the membrane as a helical segment. The Cytoplasmic portion of the chain corresponds to 292-348 (YSCRDAEMRRTFRRLLCCMCLRWSSHKSARYSASAQTGASTRIMLPENGRPLMDSTL). The S-palmitoyl cysteine moiety is linked to residue Cys-308. Positions 345-348 (DSTL) match the PDZ-binding motif.

Belongs to the G-protein coupled receptor 1 family. As to quaternary structure, interacts with SLC9A3R2/NHERF2, MAGI3 and PLCB3. Interacts with RALA and GRK2. In terms of tissue distribution, most abundantly expressed in testes, kidney, and embryonic brain. Other organs also express the transcript, including heart, lung, spleen, thymus, stomach, and adult brain. Several have little or no expression, including liver, small intestine, and skeletal muscle.

The protein resides in the cell surface. Its subcellular location is the cell membrane. Functionally, receptor for lysophosphatidic acid (LPA), a mediator of diverse cellular activities. Seems to be coupled to the G(i)/G(o), G(12)/G(13), and G(q) families of heteromeric G proteins. Plays a key role in phospholipase C-beta (PLC-beta) signaling pathway Stimulates phospholipase C (PLC) activity in a manner that is independent of RALA activation. This Mus musculus (Mouse) protein is Lysophosphatidic acid receptor 2.